The chain runs to 201 residues: Ubiquitin-conjugating enzyme E2 E2 (201 aa).

A compositionally biased stretch (basic and acidic residues) spans 1–10 (MSTEAQRVDD). The tract at residues 1–55 (MSTEAQRVDDSPSTSGGSSDGDQRESVQQEPEREQVQPKKKEGKISSKTAAKLST) is disordered. Serine 2 is subject to N-acetylserine. Serine 11, serine 15, serine 18, and serine 19 each carry phosphoserine. The span at 21–45 (GDQRESVQQEPEREQVQPKKKEGKI) shows a compositional bias: basic and acidic residues. Positions 46-55 (SSKTAAKLST) are enriched in low complexity. Residues 55–201 (TSAKRIQKEL…ARQWTKRYAT (147 aa)) enclose the UBC core domain. Cysteine 139 (glycyl thioester intermediate) is an active-site residue.

The protein belongs to the ubiquitin-conjugating enzyme family. In terms of processing, autoubiquitinated in vitro.

The enzyme catalyses S-ubiquitinyl-[E1 ubiquitin-activating enzyme]-L-cysteine + [E2 ubiquitin-conjugating enzyme]-L-cysteine = [E1 ubiquitin-activating enzyme]-L-cysteine + S-ubiquitinyl-[E2 ubiquitin-conjugating enzyme]-L-cysteine.. It participates in protein modification; protein ubiquitination. In terms of biological role, accepts ubiquitin from the E1 complex and catalyzes its covalent attachment to other proteins. In vitro catalyzes 'Lys-11'- and 'Lys-48'-, as well as 'Lys-63'-linked polyubiquitination. Catalyzes the ISGylation of influenza A virus NS1 protein. The chain is Ubiquitin-conjugating enzyme E2 E2 from Homo sapiens (Human).